The chain runs to 424 residues: Enolase (424 aa).

Residue Q163 participates in (2R)-2-phosphoglycerate binding. Catalysis depends on E204, which acts as the Proton donor. Positions 241, 284, and 311 each coordinate Mg(2+). Residues K336, R365, S366, and K387 each contribute to the (2R)-2-phosphoglycerate site. Residue K336 is the Proton acceptor of the active site.

It belongs to the enolase family. Mg(2+) serves as cofactor.

Its subcellular location is the cytoplasm. The protein resides in the secreted. The protein localises to the cell surface. It carries out the reaction (2R)-2-phosphoglycerate = phosphoenolpyruvate + H2O. It functions in the pathway carbohydrate degradation; glycolysis; pyruvate from D-glyceraldehyde 3-phosphate: step 4/5. In terms of biological role, catalyzes the reversible conversion of 2-phosphoglycerate (2-PG) into phosphoenolpyruvate (PEP). It is essential for the degradation of carbohydrates via glycolysis. This Dictyoglomus thermophilum (strain ATCC 35947 / DSM 3960 / H-6-12) protein is Enolase.